The following is a 142-amino-acid chain: Putative pre-16S rRNA nuclease (142 aa).

It belongs to the YqgF nuclease family.

The protein localises to the cytoplasm. In terms of biological role, could be a nuclease involved in processing of the 5'-end of pre-16S rRNA. This is Putative pre-16S rRNA nuclease from Ruminiclostridium cellulolyticum (strain ATCC 35319 / DSM 5812 / JCM 6584 / H10) (Clostridium cellulolyticum).